A 443-amino-acid chain; its full sequence is tRNA modification GTPase MnmE (443 aa).

Residues arginine 19, glutamate 78, and lysine 118 each coordinate (6S)-5-formyl-5,6,7,8-tetrahydrofolate. The region spanning 214 to 366 (GFKIAIIGPT…LISKIKNKLK (153 aa)) is the TrmE-type G domain. Asparagine 224 is a K(+) binding site. GTP-binding positions include 224–229 (NAGKSS), 243–249 (SEIAGTT), and 268–271 (DTAG). Serine 228 contacts Mg(2+). The K(+) site is built by serine 243, isoleucine 245, and threonine 248. Threonine 249 lines the Mg(2+) pocket. Lysine 443 contacts (6S)-5-formyl-5,6,7,8-tetrahydrofolate.

Belongs to the TRAFAC class TrmE-Era-EngA-EngB-Septin-like GTPase superfamily. TrmE GTPase family. As to quaternary structure, homodimer. Heterotetramer of two MnmE and two MnmG subunits. It depends on K(+) as a cofactor.

The protein localises to the cytoplasm. Its function is as follows. Exhibits a very high intrinsic GTPase hydrolysis rate. Involved in the addition of a carboxymethylaminomethyl (cmnm) group at the wobble position (U34) of certain tRNAs, forming tRNA-cmnm(5)s(2)U34. The chain is tRNA modification GTPase MnmE from Pelagibacter ubique (strain HTCC1062).